The following is a 98-amino-acid chain: Beta-elicitin MGM-beta (98 aa).

Cystine bridges form between Cys3–Cys71, Cys27–Cys56, and Cys51–Cys95.

The protein belongs to the elicitin family.

It is found in the secreted. Its function is as follows. Induces local and distal defense responses (incompatible hypersensitive reaction) in plants from the solanaceae and cruciferae families. Elicits leaf necrosis and causes the accumulation of pathogenesis-related proteins. Might interact with the lipidic molecules of the plasma membrane. In Phytophthora megasperma (Potato pink rot fungus), this protein is Beta-elicitin MGM-beta.